The chain runs to 112 residues: cAMP-regulated phosphoprotein 19 (112 aa).

Met1 is modified (N-acetylmethionine). Residues 1–11 (MSAEVPEAASA) show a composition bias toward low complexity. A disordered region spans residues 1-49 (MSAEVPEAASAEEQKEMEDKVTSPEKAEEAKLKARYPHLGQKPGGSDFL). Ser2 bears the N-acetylserine mark. Phosphoserine occurs at positions 2 and 23. Basic and acidic residues predominate over residues 12-32 (EEQKEMEDKVTSPEKAEEAKL). Residues Ser62 and Ser104 each carry the phosphoserine; by GWL modification. The segment at 72-112 (MKNKQLPTATPDKTEVTGDHIPTPQDLPQRKPSLVASKLAG) is disordered. Position 104 is a phosphoserine; by PKA (Ser104). Residue Lys109 is modified to N6-acetyllysine.

In terms of assembly, interacts (when phosphorylated at Ser-62) with PPP2R2D. Interacts with SNCA. Interacts with PPP2R2A; the interaction is direct and this interaction inhibits PP2A activity. Post-translationally, phosphorylation at Ser-62 by MASTL/GWL during mitosis is essential for interaction with PPP2R2D (PR55-delta) and subsequent inactivation of PP2A. Phosphorylated by PKA. In terms of tissue distribution, isoform ARPP-19 is found in all brain regions and also present in non-neuronal tissues. Isoform ARPP-16 is enriched in the caudate nucleus, found in low levels in cerebral cortex.

The protein localises to the cytoplasm. Protein phosphatase inhibitor that specifically inhibits protein phosphatase 2A (PP2A) during mitosis. Inhibition of PP2A is enhanced when ARPP19 is phosphorylated. When phosphorylated at Ser-62 during mitosis, specifically interacts with PPP2R2D (PR55-delta) and inhibits its activity, leading to inactivation of PP2A, an essential condition to keep cyclin-B1-CDK1 activity high during M phase. May indirectly enhance GAP-43 expression. This chain is cAMP-regulated phosphoprotein 19 (ARPP19), found in Bos taurus (Bovine).